The chain runs to 145 residues: Holo-[acyl-carrier-protein] synthase (145 aa).

Mg(2+)-binding residues include aspartate 9 and glutamate 63.

The protein belongs to the P-Pant transferase superfamily. AcpS family. Mg(2+) is required as a cofactor.

The protein resides in the cytoplasm. The enzyme catalyses apo-[ACP] + CoA = holo-[ACP] + adenosine 3',5'-bisphosphate + H(+). In terms of biological role, transfers the 4'-phosphopantetheine moiety from coenzyme A to a Ser of acyl-carrier-protein. The polypeptide is Holo-[acyl-carrier-protein] synthase (Burkholderia vietnamiensis (strain G4 / LMG 22486) (Burkholderia cepacia (strain R1808))).